A 286-amino-acid polypeptide reads, in one-letter code: Pantothenate synthetase (286 aa).

30-37 (MGNLHSGH) serves as a coordination point for ATP. Histidine 37 (proton donor) is an active-site residue. Glutamine 61 contacts (R)-pantoate. Glutamine 61 provides a ligand contact to beta-alanine. 149 to 152 (GQKD) is a binding site for ATP. Glutamine 155 is a binding site for (R)-pantoate. ATP-binding positions include valine 178 and 186–189 (LSSR).

The protein belongs to the pantothenate synthetase family. As to quaternary structure, homodimer.

The protein localises to the cytoplasm. It carries out the reaction (R)-pantoate + beta-alanine + ATP = (R)-pantothenate + AMP + diphosphate + H(+). It functions in the pathway cofactor biosynthesis; (R)-pantothenate biosynthesis; (R)-pantothenate from (R)-pantoate and beta-alanine: step 1/1. In terms of biological role, catalyzes the condensation of pantoate with beta-alanine in an ATP-dependent reaction via a pantoyl-adenylate intermediate. The polypeptide is Pantothenate synthetase (Pseudomonas fluorescens (strain ATCC BAA-477 / NRRL B-23932 / Pf-5)).